The primary structure comprises 506 residues: Bifunctional purine biosynthesis protein PurH (506 aa).

One can recognise an MGS-like domain in the interval 1-142 (MRAIISVYRK…KNFFRVVILV (142 aa)).

Belongs to the PurH family.

The enzyme catalyses (6R)-10-formyltetrahydrofolate + 5-amino-1-(5-phospho-beta-D-ribosyl)imidazole-4-carboxamide = 5-formamido-1-(5-phospho-D-ribosyl)imidazole-4-carboxamide + (6S)-5,6,7,8-tetrahydrofolate. It carries out the reaction IMP + H2O = 5-formamido-1-(5-phospho-D-ribosyl)imidazole-4-carboxamide. It functions in the pathway purine metabolism; IMP biosynthesis via de novo pathway; 5-formamido-1-(5-phospho-D-ribosyl)imidazole-4-carboxamide from 5-amino-1-(5-phospho-D-ribosyl)imidazole-4-carboxamide (10-formyl THF route): step 1/1. The protein operates within purine metabolism; IMP biosynthesis via de novo pathway; IMP from 5-formamido-1-(5-phospho-D-ribosyl)imidazole-4-carboxamide: step 1/1. This is Bifunctional purine biosynthesis protein PurH from Aquifex aeolicus (strain VF5).